Consider the following 190-residue polypeptide: RING finger protein 227 (190 aa).

The RING-type zinc finger occupies 18–81 (CNICYRPFNL…RRVVTCPFCR (64 aa)). The disordered stretch occupies residues 111 to 145 (KCERDEAGNPAKESSDADGEAEEEGESEKGAGPRS). Residues 126-136 (DADGEAEEEGE) are compositionally biased toward acidic residues.

The chain is RING finger protein 227 from Homo sapiens (Human).